A 1458-amino-acid polypeptide reads, in one-letter code: Anaphase-promoting complex subunit 1 (1458 aa).

Positions 186-210 (QSIKSSRNRRRESSFSREKNPDLTR) are disordered. The span at 196–210 (RESSFSREKNPDLTR) shows a compositional bias: basic and acidic residues. PC repeat units lie at residues 873 to 895 (GLLL…KLLS), 959 to 982 (AAGF…SDLK), 1006 to 1024 (GAIM…LEVA), and 1099 to 1124 (GICF…INFL).

Belongs to the APC1 family. In terms of assembly, the APC/C is composed of at least 13 subunits: apc1, apc2, nuc2, apc4, apc5, cut9, apc8, apc10, apc11, hcn1, apc13, apc14 and apc15.

Component of the anaphase-promoting complex/cyclosome (APC/C), a cell cycle-regulated E3 ubiquitin-protein ligase complex that controls progression through mitosis and the G1 phase of the cell cycle. The APC/C is thought to confer substrate specificity and, in the presence of ubiquitin-conjugating E2 enzymes, it catalyzes the formation of protein-ubiquitin conjugates that are subsequently degraded by the 26S proteasome. Mutations to this protein prevent the exit from mitosis. This chain is Anaphase-promoting complex subunit 1 (cut4), found in Schizosaccharomyces pombe (strain 972 / ATCC 24843) (Fission yeast).